We begin with the raw amino-acid sequence, 474 residues long: Glutamate--tRNA ligase 1 (474 aa).

A 'HIGH' region motif is present at residues 11 to 21 (PSPTGYLHIGG). A 'KMSKS' region motif is present at residues 240-244 (KLSKR). ATP is bound at residue Lys-243.

This sequence belongs to the class-I aminoacyl-tRNA synthetase family. Glutamate--tRNA ligase type 1 subfamily. In terms of assembly, monomer.

It is found in the cytoplasm. The catalysed reaction is tRNA(Glu) + L-glutamate + ATP = L-glutamyl-tRNA(Glu) + AMP + diphosphate. Its function is as follows. Catalyzes the attachment of glutamate to tRNA(Glu) in a two-step reaction: glutamate is first activated by ATP to form Glu-AMP and then transferred to the acceptor end of tRNA(Glu). The protein is Glutamate--tRNA ligase 1 of Mesorhizobium japonicum (strain LMG 29417 / CECT 9101 / MAFF 303099) (Mesorhizobium loti (strain MAFF 303099)).